The following is a 601-amino-acid chain: Proteasome-associated ATPase (601 aa).

Over residues 1-15 (MSGPRSGSGSGGSTG) the composition is skewed to gly residues. The interval 1–29 (MSGPRSGSGSGGSTGRPGDADSQRSAYEK) is disordered. The span at 18 to 29 (GDADSQRSAYEK) shows a compositional bias: basic and acidic residues. Positions 19–106 (DADSQRSAYE…LKEEVDRLAQ (88 aa)) form a coiled coil. ATP is bound at residue 289–294 (GCGKTL). The interval 600-601 (YL) is docks into pockets in the proteasome alpha-ring.

It belongs to the AAA ATPase family. Homohexamer. Assembles into a hexameric ring structure that caps the 20S proteasome core. Strongly interacts with the prokaryotic ubiquitin-like protein Pup through a hydrophobic interface; the interacting region of ARC lies in its N-terminal coiled-coil domain. There is one Pup binding site per ARC hexamer ring. Upon ATP-binding, the C-terminus of ARC interacts with the alpha-rings of the proteasome core, possibly by binding to the intersubunit pockets.

It participates in protein degradation; proteasomal Pup-dependent pathway. Functionally, ATPase which is responsible for recognizing, binding, unfolding and translocation of pupylated proteins into the bacterial 20S proteasome core particle. May be essential for opening the gate of the 20S proteasome via an interaction with its C-terminus, thereby allowing substrate entry and access to the site of proteolysis. Thus, the C-termini of the proteasomal ATPase may function like a 'key in a lock' to induce gate opening and therefore regulate proteolysis. The sequence is that of Proteasome-associated ATPase from Parafrankia sp. (strain EAN1pec).